A 320-amino-acid chain; its full sequence is MVSVNIEAKKIVDRMIEGADDLKISVDKLENGSTVIDCGVNVDGSIKAGELYTAVCLGGLADVGISIPGDLSERFALPSVKIKTDFPAISTLGAQKAGWSVSVGDFFALGSGPARALALKPAETYEEIGYQDEADIAVLTLEADKLPGEDVTDKIAEECDVSPENVYVLVAPTSSLVGSIQISGRVVENGTYKMLEALHFDVNKVKYAAGIAPIAPVDPDSLKAMGKTNDAVLFGGRTYYYIESEEGDDIKSLAENLPSSASEGYGKPFYDVFKEADYDFYKIDKGMFAPAEVVINDLRTGEVFRAGFVNEELLMKSFGL.

It belongs to the MCH family. As to quaternary structure, homodimer.

It is found in the cytoplasm. It catalyses the reaction 5,10-methenyl-5,6,7,8-tetrahydromethanopterin + H2O = N(5)-formyl-5,6,7,8-tetrahydromethanopterin + H(+). It functions in the pathway one-carbon metabolism; methanogenesis from CO(2); 5,10-methenyl-5,6,7,8-tetrahydromethanopterin from CO(2): step 3/3. Functionally, catalyzes the reversible interconversion of 5-formyl-H(4)MPT to methenyl-H(4)MPT(+). The chain is Methenyltetrahydromethanopterin cyclohydrolase (mch) from Methanothermobacter marburgensis (strain ATCC BAA-927 / DSM 2133 / JCM 14651 / NBRC 100331 / OCM 82 / Marburg) (Methanobacterium thermoautotrophicum).